The sequence spans 252 residues: Probable transcriptional regulatory protein Tmel_0985 (252 aa).

The protein belongs to the TACO1 family.

It localises to the cytoplasm. The polypeptide is Probable transcriptional regulatory protein Tmel_0985 (Thermosipho melanesiensis (strain DSM 12029 / CIP 104789 / BI429)).